Here is a 188-residue protein sequence, read N- to C-terminus: Heterodisulfide reductase subunit C-like protein (188 aa).

2 consecutive 4Fe-4S ferredoxin-type domains span residues 34 to 64 (KELG…FEWY) and 78 to 109 (DELL…FEVM). Positions 44, 47, 50, 54, 89, 92, 95, and 99 each coordinate [4Fe-4S] cluster.

This sequence belongs to the HdrC family. In terms of assembly, the heterodisulfide reductase is composed of three subunits; HdlA, HdlB and HdlC. It forms a complex with the F420-non-reducing hydrogenase (Mvh), which provides the reducing equivalents to the heterodisulfide reductase.

The protein resides in the cytoplasm. Functionally, has oxidoreductase activity. The Hdl and Mvh subunits may together mediate electron transfer from hydrogen to an unidentified electron acceptor on the cytoplasmic side of the membrane. This chain is Heterodisulfide reductase subunit C-like protein (hdlC), found in Archaeoglobus profundus (strain DSM 5631 / JCM 9629 / NBRC 100127 / Av18).